The chain runs to 431 residues: Enolase (431 aa).

Gln-163 contributes to the (2R)-2-phosphoglycerate binding site. Glu-205 (proton donor) is an active-site residue. The Mg(2+) site is built by Asp-242, Glu-288, and Asp-315. Residues Lys-340, Arg-369, Ser-370, and Lys-391 each coordinate (2R)-2-phosphoglycerate. Catalysis depends on Lys-340, which acts as the Proton acceptor.

It belongs to the enolase family. Requires Mg(2+) as cofactor.

The protein localises to the cytoplasm. Its subcellular location is the secreted. It is found in the cell surface. It catalyses the reaction (2R)-2-phosphoglycerate = phosphoenolpyruvate + H2O. It functions in the pathway carbohydrate degradation; glycolysis; pyruvate from D-glyceraldehyde 3-phosphate: step 4/5. Functionally, catalyzes the reversible conversion of 2-phosphoglycerate (2-PG) into phosphoenolpyruvate (PEP). It is essential for the degradation of carbohydrates via glycolysis. The protein is Enolase of Trichlorobacter lovleyi (strain ATCC BAA-1151 / DSM 17278 / SZ) (Geobacter lovleyi).